Here is a 202-residue protein sequence, read N- to C-terminus: Small ribosomal subunit protein uS4 (202 aa).

Residues 23–42 form a disordered region; that stretch reads RKAARRSYPPGQHGQARRKR. The 65-residue stretch at 90-154 folds into the S4 RNA-binding domain; sequence MRLDNLVFRL…SRKLVTANLE (65 aa).

The protein belongs to the universal ribosomal protein uS4 family. Part of the 30S ribosomal subunit. Contacts protein S5. The interaction surface between S4 and S5 is involved in control of translational fidelity.

One of the primary rRNA binding proteins, it binds directly to 16S rRNA where it nucleates assembly of the body of the 30S subunit. Functionally, with S5 and S12 plays an important role in translational accuracy. This Synechococcus elongatus (strain ATCC 33912 / PCC 7942 / FACHB-805) (Anacystis nidulans R2) protein is Small ribosomal subunit protein uS4.